The primary structure comprises 341 residues: ATP-dependent 6-phosphofructokinase 2 (341 aa).

ATP is bound by residues Gly-10, 72–73 (RL), and 102–105 (GEGT). Glu-103 contacts Mg(2+). Residues 125-127 (TID), Arg-162, 169-171 (MGR), Glu-222, Lys-266, and 272-275 (HVQR) contribute to the substrate site. Asp-127 serves as the catalytic Proton acceptor.

The protein belongs to the phosphofructokinase type A (PFKA) family. Mixed-substrate PFK group III subfamily. Homodimer or homotetramer. It depends on Mg(2+) as a cofactor.

It is found in the cytoplasm. The enzyme catalyses beta-D-fructose 6-phosphate + ATP = beta-D-fructose 1,6-bisphosphate + ADP + H(+). It participates in carbohydrate degradation; glycolysis; D-glyceraldehyde 3-phosphate and glycerone phosphate from D-glucose: step 3/4. With respect to regulation, allosterically inhibited by phosphoenolpyruvate. Its function is as follows. Catalyzes the phosphorylation of D-fructose 6-phosphate to fructose 1,6-bisphosphate by ATP, the first committing step of glycolysis. The chain is ATP-dependent 6-phosphofructokinase 2 from Streptomyces coelicolor (strain ATCC BAA-471 / A3(2) / M145).